The primary structure comprises 260 residues: Hemin import ATP-binding protein HmuV (260 aa).

The ABC transporter domain maps to 2 to 239 (IRAENITLIR…ETIARVYGIG (238 aa)). 34 to 41 (GPNGAGKS) contacts ATP.

The protein belongs to the ABC transporter superfamily. Heme (hemin) importer (TC 3.A.1.14.5) family. The complex is composed of two ATP-binding proteins (HmuV), two transmembrane proteins (HmuU) and a solute-binding protein (HmuT).

It localises to the cell inner membrane. Functionally, part of the ABC transporter complex HmuTUV involved in hemin import. Responsible for energy coupling to the transport system. This chain is Hemin import ATP-binding protein HmuV, found in Agrobacterium fabrum (strain C58 / ATCC 33970) (Agrobacterium tumefaciens (strain C58)).